A 729-amino-acid polypeptide reads, in one-letter code: Fatty acid oxidation complex subunit alpha (729 aa).

The enoyl-CoA hydratase/isomerase stretch occupies residues 1–189 (MLYKGDTLYL…KIGLVDGVVK (189 aa)). Residue D296 coordinates substrate. Residues 311–729 (ETPKQAAVLG…ARPVGDLKTA (419 aa)) form a 3-hydroxyacyl-CoA dehydrogenase region. Residues M324, D343, 400 to 402 (VVE), K407, and S429 contribute to the NAD(+) site. The For 3-hydroxyacyl-CoA dehydrogenase activity role is filled by H450. Residue N453 participates in NAD(+) binding. Substrate contacts are provided by N500 and Y660. A disordered region spans residues 708-729 (RHNEPYYPPVEPARPVGDLKTA).

This sequence in the N-terminal section; belongs to the enoyl-CoA hydratase/isomerase family. It in the C-terminal section; belongs to the 3-hydroxyacyl-CoA dehydrogenase family. As to quaternary structure, heterotetramer of two alpha chains (FadB) and two beta chains (FadA).

It carries out the reaction a (3S)-3-hydroxyacyl-CoA + NAD(+) = a 3-oxoacyl-CoA + NADH + H(+). The catalysed reaction is a (3S)-3-hydroxyacyl-CoA = a (2E)-enoyl-CoA + H2O. It catalyses the reaction a 4-saturated-(3S)-3-hydroxyacyl-CoA = a (3E)-enoyl-CoA + H2O. The enzyme catalyses (3S)-3-hydroxybutanoyl-CoA = (3R)-3-hydroxybutanoyl-CoA. It carries out the reaction a (3Z)-enoyl-CoA = a 4-saturated (2E)-enoyl-CoA. The catalysed reaction is a (3E)-enoyl-CoA = a 4-saturated (2E)-enoyl-CoA. The protein operates within lipid metabolism; fatty acid beta-oxidation. Functionally, involved in the aerobic and anaerobic degradation of long-chain fatty acids via beta-oxidation cycle. Catalyzes the formation of 3-oxoacyl-CoA from enoyl-CoA via L-3-hydroxyacyl-CoA. It can also use D-3-hydroxyacyl-CoA and cis-3-enoyl-CoA as substrate. In Escherichia coli O81 (strain ED1a), this protein is Fatty acid oxidation complex subunit alpha.